The primary structure comprises 300 residues: Ribosomal protein L11 methyltransferase (300 aa).

4 residues coordinate S-adenosyl-L-methionine: T152, G173, D195, and N234.

Belongs to the methyltransferase superfamily. PrmA family.

The protein localises to the cytoplasm. The enzyme catalyses L-lysyl-[protein] + 3 S-adenosyl-L-methionine = N(6),N(6),N(6)-trimethyl-L-lysyl-[protein] + 3 S-adenosyl-L-homocysteine + 3 H(+). Its function is as follows. Methylates ribosomal protein L11. The sequence is that of Ribosomal protein L11 methyltransferase from Burkholderia cenocepacia (strain ATCC BAA-245 / DSM 16553 / LMG 16656 / NCTC 13227 / J2315 / CF5610) (Burkholderia cepacia (strain J2315)).